A 165-amino-acid polypeptide reads, in one-letter code: Pyruvoyl-dependent arginine decarboxylase (165 aa).

Ser-53 bears the Pyruvic acid (Ser) mark.

This sequence belongs to the PdaD family. It depends on pyruvate as a cofactor.

It carries out the reaction L-arginine + H(+) = agmatine + CO2. In Methanococcus aeolicus (strain ATCC BAA-1280 / DSM 17508 / OCM 812 / Nankai-3), this protein is Pyruvoyl-dependent arginine decarboxylase.